Reading from the N-terminus, the 204-residue chain is Leucyl/phenylalanyl-tRNA--protein transferase (204 aa).

It belongs to the L/F-transferase family.

The protein localises to the cytoplasm. It catalyses the reaction N-terminal L-lysyl-[protein] + L-leucyl-tRNA(Leu) = N-terminal L-leucyl-L-lysyl-[protein] + tRNA(Leu) + H(+). It carries out the reaction N-terminal L-arginyl-[protein] + L-leucyl-tRNA(Leu) = N-terminal L-leucyl-L-arginyl-[protein] + tRNA(Leu) + H(+). The catalysed reaction is L-phenylalanyl-tRNA(Phe) + an N-terminal L-alpha-aminoacyl-[protein] = an N-terminal L-phenylalanyl-L-alpha-aminoacyl-[protein] + tRNA(Phe). Functions in the N-end rule pathway of protein degradation where it conjugates Leu, Phe and, less efficiently, Met from aminoacyl-tRNAs to the N-termini of proteins containing an N-terminal arginine or lysine. The chain is Leucyl/phenylalanyl-tRNA--protein transferase from Sinorhizobium fredii (strain NBRC 101917 / NGR234).